The chain runs to 142 residues: Pro-vaccinia growth factor (142 aa).

Residues 1 to 18 (MSMKYLMLLFAAMIIRSF) form the signal peptide. At 19-100 (ADSGNAIETT…SENPNTTTSY (82 aa)) the chain is on the extracellular side. An N-linked (GlcNAc...) asparagine; by host glycan is attached at N34. The region spanning 41-81 (AIRLCGPEGDGYCLHGDCIHARDIDGMYCRCSHGYTGIRCQ) is the EGF-like domain. 3 disulfides stabilise this stretch: C45–C58, C53–C69, and C71–C80. An N-linked (GlcNAc...) asparagine; by host glycan is attached at N95. The helical transmembrane segment at 101–121 (IPSPGIMLVLVGIIIIITCCL) threads the bilayer. Residues 122–142 (LSVYRFTRRTNKLPLQDMVVP) are Cytoplasmic-facing.

Belongs to the orthopoxvirus OPG019 family. Vaccinia growth factor interacts with host EGFR and promotes EGFR dimerization.

It localises to the host membrane. It is found in the secreted. Stimulates cellular proliferation (hyperplasia)and mobility around infected cells to promote rapid and efficient spread of infection. This effect is beneficial for virus replication in vivo, because poxviruses replicate possibly better in proliferating cells than in quiescent cells. Acts by binding host EGFR, inducing its dimerization, autophosphorylation and leading to activation of several cellular pathways regulating cell proliferation or cell survival. The activation by host EGFR of mitogen activated protein kinases (MAPK) and extracellular-signal regulated kinases (ERK) are essential for the positive effect of vaccinia growth factor on poxvirus virulence in vivo. The chain is Pro-vaccinia growth factor (OPG019) from Vaccinia virus (strain Copenhagen) (VACV).